The following is a 203-amino-acid chain: Probable chemoreceptor glutamine deamidase CheD (203 aa).

This sequence belongs to the CheD family.

The catalysed reaction is L-glutaminyl-[protein] + H2O = L-glutamyl-[protein] + NH4(+). Its function is as follows. Probably deamidates glutamine residues to glutamate on methyl-accepting chemotaxis receptors (MCPs), playing an important role in chemotaxis. The polypeptide is Probable chemoreceptor glutamine deamidase CheD (Methylobacillus flagellatus (strain ATCC 51484 / DSM 6875 / VKM B-1610 / KT)).